Consider the following 184-residue polypeptide: Large ribosomal subunit protein uL22 (184 aa).

Positions 160–184 (PEEEVAQKKKISQKKLKKQKLMARE) are disordered. Over residues 167–184 (KKKISQKKLKKQKLMARE) the composition is skewed to basic residues.

The protein belongs to the universal ribosomal protein uL22 family. As to quaternary structure, component of the large ribosomal subunit. In terms of tissue distribution, expressed in pancreas, lung, colon, cystic duct, gall bladder, kidney and liver. Expressed at high levels in the well differentiated pancreatic tumor cell lines HPAF, COLO 357 and Capan-1, the moderately differentiated pancreatic tumor cell lines T3M-4, AsPc-1 and BxPc-3, the poorly differentiated pancreatic tumor cell line MIA PaCa-2, and the pancreatic tumor cell lines of undefined differentiation status such as SW979. Expressed at lower levels in the poorly differentiated pancreatic tumor cell lines HCG-25 and PANC-1.

It is found in the cytoplasm. Component of the large ribosomal subunit. The ribosome is a large ribonucleoprotein complex responsible for the synthesis of proteins in the cell. The protein is Large ribosomal subunit protein uL22 (RPL17) of Homo sapiens (Human).